A 137-amino-acid chain; its full sequence is MPTINQLIRKGRKSKGSKSNSPALNFGYNSYKKVQTNNSAPQKRGVATRVGTMTPKKPNSALRKYARVRLSNLIEVTAYIPGIGHNLQEHSVVLIRGGRVKDLPGVRYHIVRGALDTAGVEGRMQSRSKYGAKKPKK.

A disordered region spans residues 1–57; it reads MPTINQLIRKGRKSKGSKSNSPALNFGYNSYKKVQTNNSAPQKRGVATRVGTMTPKK. Residues 32–41 are compositionally biased toward polar residues; it reads KKVQTNNSAP. Asp-102 is modified (3-methylthioaspartic acid).

It belongs to the universal ribosomal protein uS12 family. In terms of assembly, part of the 30S ribosomal subunit. Contacts proteins S8 and S17. May interact with IF1 in the 30S initiation complex.

Its function is as follows. With S4 and S5 plays an important role in translational accuracy. In terms of biological role, interacts with and stabilizes bases of the 16S rRNA that are involved in tRNA selection in the A site and with the mRNA backbone. Located at the interface of the 30S and 50S subunits, it traverses the body of the 30S subunit contacting proteins on the other side and probably holding the rRNA structure together. The combined cluster of proteins S8, S12 and S17 appears to hold together the shoulder and platform of the 30S subunit. The protein is Small ribosomal subunit protein uS12 of Ligilactobacillus salivarius (strain UCC118) (Lactobacillus salivarius).